Consider the following 386-residue polypeptide: MDFDGWLLGRLDAVKRDGLYRTLRTQETALKTKGQKRQTWASNDYLGLSKDERLITAAQTAMSRFGAGSGGSRLTTGNTVWHEKLEHTIADFKQTEAALLFSSGYLANIGVLASLPQKGDVILSDQLNHASIVDGCRLSKAETIVYRHIDMADLEKKLASVQARNRRFIVTDGVFSMDGTIAPLDRIMALAKQYQAFVIADDAHATGVLGENGGGTSDYFGVCPDVVIGTLSKAVGTEGGFAAGSNIFIDFLLNQARTFIFQTALPPSICAASHTAFDIISDMHDTRRELQSSVKMIKTRLADMGFTVRGGDTPIIPVIIGDAKTAVSAAALLEKKGICAPAIRPPAVPEGESRIRLTVTADRSLQDIDELTEAFDSIRKELNINK.

Arginine 21 is a binding site for substrate. 104 to 105 serves as a coordination point for pyridoxal 5'-phosphate; that stretch reads GY. Histidine 129 contacts substrate. Pyridoxal 5'-phosphate contacts are provided by residues serine 176, 201-204, and 230-233; these read DDAH and TLSK. At lysine 233 the chain carries N6-(pyridoxal phosphate)lysine.

This sequence belongs to the class-II pyridoxal-phosphate-dependent aminotransferase family. BioF subfamily. As to quaternary structure, homodimer. Pyridoxal 5'-phosphate is required as a cofactor.

It carries out the reaction 6-carboxyhexanoyl-[ACP] + L-alanine + H(+) = (8S)-8-amino-7-oxononanoate + holo-[ACP] + CO2. The protein operates within cofactor biosynthesis; biotin biosynthesis. Its function is as follows. Catalyzes the decarboxylative condensation of pimeloyl-[acyl-carrier protein] and L-alanine to produce 8-amino-7-oxononanoate (AON), [acyl-carrier protein], and carbon dioxide. This is Putative 8-amino-7-oxononanoate synthase 2 (bioF) from Bacillus velezensis (strain DSM 23117 / BGSC 10A6 / LMG 26770 / FZB42) (Bacillus amyloliquefaciens subsp. plantarum).